The primary structure comprises 701 residues: Transcriptional regulator Kaiso (701 aa).

The 63-residue stretch at 32–94 (CDVTVIVEDR…IYSSKIVRVR (63 aa)) folds into the BTB domain. 2 disordered regions span residues 128–158 (GAGGKDGGTDAPSNPDHKAPEPQKSSDSPLP) and 181–311 (SSDD…QNQH). Positions 245 to 258 (TPSSQVQLTQNSLP) are enriched in polar residues. The segment covering 259-273 (TNQQSSKNTSSTTQK) has biased composition (low complexity). Residues 278–311 (VNANISKNPTPAANGFLSPTAQKQGTPNAVQNQH) are compositionally biased toward polar residues. The required for methylation dependent DNA-binding stretch occupies residues 470–609 (AKLDLDGLPN…QIRQYAYVNN (140 aa)). C2H2-type zinc fingers lie at residues 501–523 (YICIVCKRSYVCLTSLRRHFNVH), 529–551 (YPCRYCERVFPLAEYRTKHEIHH), and 557–580 (YQCLTCGSSFINYQVMASHIRSVH). Residues 519–701 (HFNVHSWEKK…EFEFVIPESY (183 aa)) are required for sequence specific DNA-binding. Positions 644 to 664 (DIDPDEPQQPASEGNHANSAT) are disordered. A compositionally biased stretch (polar residues) spans 652 to 664 (QPASEGNHANSAT).

Self associates. Interacts with tcf7l1-A, leading to repression of tcf7l1-A target genes. Interacts with ctnnd1, and this interaction may inhibit DNA-binding. Interacts with ncor1.

The protein resides in the nucleus. Its function is as follows. Transcriptional regulator with bimodal DNA-binding specificity. Binds to methylated CpG dinucleotides in the consensus sequence 5'-CGCG-3' and also binds to the non-methylated consensus sequence 5'-CTGCNA-3'. May recruit the N-CoR repressor complex to promote histone deacetylation and the formation of repressive chromatin structures in target gene promoters. Contributes to the repression of target genes of the Wnt signaling pathway and to the methylation-dependent repression of zygotic transcription prior to the mid-blastula transition (MBT). Also required for gastrulation movements. The sequence is that of Transcriptional regulator Kaiso (zbtb33) from Xenopus laevis (African clawed frog).